Reading from the N-terminus, the 650-residue chain is Flap endonuclease 1 (650 aa).

An N-domain region spans residues 1 to 106 (MGIKGLTKFI…SELEKRGEKR (106 aa)). Mg(2+) is bound at residue D34. The DNA site is built by R47 and R72. The Mg(2+) site is built by D88, E160, E162, D181, and D183. An I-domain region spans residues 124-266 (EIKKQSGRTV…KTAYNLIKEY (143 aa)). E160 contributes to the DNA binding site. Positions 244 and 246 each coordinate DNA. Position 246 (D246) interacts with Mg(2+). Residues 349-357 (TQRRLDNFF) are interaction with PCNA. The interval 371–592 (ETKKEQTLPA…NSYNNIKNNN (222 aa)) is disordered. Composition is skewed to basic and acidic residues over residues 413 to 469 (MKEE…KKSL), 478 to 502 (DSDK…EKIN), and 511 to 524 (DHSR…KDNI). Residues 525 to 562 (SDINNNNNNNNNNSSSNNNNISNNHFNSVSSNSTFNSS) show a composition bias toward low complexity. The span at 565 to 581 (LKSEDTLKSNSPLKEDS) shows a compositional bias: basic and acidic residues. Residues 582–592 (PNSYNNIKNNN) show a composition bias toward low complexity.

The protein belongs to the XPG/RAD2 endonuclease family. FEN1 subfamily. In terms of assembly, interacts with PCNA1 and PCNA2. Three molecules of FEN1 bind to one PCNA trimer with each molecule binding to one PCNA monomer. PCNA stimulates the nuclease activity without altering cleavage specificity. Mg(2+) is required as a cofactor. Phosphorylated. Phosphorylation upon DNA damage induces relocalization to the nuclear plasma.

It is found in the nucleus. It localises to the nucleolus. Its subcellular location is the nucleoplasm. The protein resides in the mitochondrion. Inhibited by monovalent metal ions. In terms of biological role, structure-specific nuclease with 5'-flap endonuclease and 5'-3' exonuclease activities involved in DNA replication and repair. During DNA replication, cleaves the 5'-overhanging flap structure that is generated by displacement synthesis when DNA polymerase encounters the 5'-end of a downstream Okazaki fragment. It enters the flap from the 5'-end and then tracks to cleave the flap base, leaving a nick for ligation. Also involved in the long patch base excision repair (LP-BER) pathway, by cleaving within the apurinic/apyrimidinic (AP) site-terminated flap. Acts as a genome stabilization factor that prevents flaps from equilibrating into structures that lead to duplications and deletions. Also possesses 5'-3' exonuclease activity on nicked or gapped double-stranded DNA, and exhibits RNase H activity. Also involved in replication and repair of rDNA and in repairing mitochondrial DNA. The polypeptide is Flap endonuclease 1 (Plasmodium falciparum).